The primary structure comprises 274 residues: Dermonecrotic toxin SdSicTox-betaIIB1ai (274 aa).

His5 is a catalytic residue. 2 residues coordinate Mg(2+): Glu25 and Asp27. His41 serves as the catalytic Nucleophile. Intrachain disulfides connect Cys45/Cys51 and Cys47/Cys190. Asp85 contributes to the Mg(2+) binding site.

The protein belongs to the arthropod phospholipase D family. Class II subfamily. The cofactor is Mg(2+). As to expression, expressed by the venom gland.

The protein resides in the secreted. The catalysed reaction is an N-(acyl)-sphingosylphosphocholine = an N-(acyl)-sphingosyl-1,3-cyclic phosphate + choline. The enzyme catalyses an N-(acyl)-sphingosylphosphoethanolamine = an N-(acyl)-sphingosyl-1,3-cyclic phosphate + ethanolamine. It catalyses the reaction a 1-acyl-sn-glycero-3-phosphocholine = a 1-acyl-sn-glycero-2,3-cyclic phosphate + choline. It carries out the reaction a 1-acyl-sn-glycero-3-phosphoethanolamine = a 1-acyl-sn-glycero-2,3-cyclic phosphate + ethanolamine. Functionally, dermonecrotic toxins cleave the phosphodiester linkage between the phosphate and headgroup of certain phospholipids (sphingolipid and lysolipid substrates), forming an alcohol (often choline) and a cyclic phosphate. This toxin acts on sphingomyelin (SM). It may also act on ceramide phosphoethanolamine (CPE), lysophosphatidylcholine (LPC) and lysophosphatidylethanolamine (LPE), but not on lysophosphatidylserine (LPS), and lysophosphatidylglycerol (LPG). It acts by transphosphatidylation, releasing exclusively cyclic phosphate products as second products. Induces dermonecrosis, hemolysis, increased vascular permeability, edema, inflammatory response, and platelet aggregation. This Sicarius cf. damarensis (strain GJB-2008) (Six-eyed sand spider) protein is Dermonecrotic toxin SdSicTox-betaIIB1ai.